A 114-amino-acid polypeptide reads, in one-letter code: T cell receptor beta variable 4-1 (114 aa).

Positions M1–T21 are cleaved as a signal peptide. The Ig-like domain occupies E22 to Q114. Cysteines 42 and 110 form a disulfide. 2 N-linked (GlcNAc...) asparagine glycosylation sites follow: N76 and N89.

As to quaternary structure, alpha-beta TR is a heterodimer composed of an alpha and beta chain; disulfide-linked. The alpha-beta TR is associated with the transmembrane signaling CD3 coreceptor proteins to form the TR-CD3 (TcR or TCR). The assembly of alpha-beta TR heterodimers with CD3 occurs in the endoplasmic reticulum where a single alpha-beta TR heterodimer associates with one CD3D-CD3E heterodimer, one CD3G-CD3E heterodimer and one CD247 homodimer forming a stable octameric structure. CD3D-CD3E and CD3G-CD3E heterodimers preferentially associate with TR alpha and TR beta chains, respectively. The association of the CD247 homodimer is the last step of TcR assembly in the endoplasmic reticulum and is required for transport to the cell surface.

Its subcellular location is the cell membrane. In terms of biological role, v region of the variable domain of T cell receptor (TR) beta chain that participates in the antigen recognition. Alpha-beta T cell receptors are antigen specific receptors which are essential to the immune response and are present on the cell surface of T lymphocytes. Recognize peptide-major histocompatibility (MH) (pMH) complexes that are displayed by antigen presenting cells (APC), a prerequisite for efficient T cell adaptive immunity against pathogens. Binding of alpha-beta TR to pMH complex initiates TR-CD3 clustering on the cell surface and intracellular activation of LCK that phosphorylates the ITAM motifs of CD3G, CD3D, CD3E and CD247 enabling the recruitment of ZAP70. In turn ZAP70 phosphorylates LAT, which recruits numerous signaling molecules to form the LAT signalosome. The LAT signalosome propagates signal branching to three major signaling pathways, the calcium, the mitogen-activated protein kinase (MAPK) kinase and the nuclear factor NF-kappa-B (NF-kB) pathways, leading to the mobilization of transcription factors that are critical for gene expression and essential for T cell growth and differentiation. The T cell repertoire is generated in the thymus, by V-(D)-J rearrangement. This repertoire is then shaped by intrathymic selection events to generate a peripheral T cell pool of self-MH restricted, non-autoaggressive T cells. Post-thymic interaction of alpha-beta TR with the pMH complexes shapes TR structural and functional avidity. The protein is T cell receptor beta variable 4-1 of Homo sapiens (Human).